The primary structure comprises 243 residues: Uridylate kinase (243 aa).

18–21 (KLGG) is an ATP binding site. Residue glycine 59 participates in UMP binding. 2 residues coordinate ATP: glycine 60 and arginine 64. UMP-binding positions include aspartate 79 and 140 to 147 (MGMPYFST). The ATP site is built by tyrosine 173 and aspartate 176.

It belongs to the UMP kinase family. As to quaternary structure, homohexamer.

The protein resides in the cytoplasm. It carries out the reaction UMP + ATP = UDP + ADP. The protein operates within pyrimidine metabolism; CTP biosynthesis via de novo pathway; UDP from UMP (UMPK route): step 1/1. Inhibited by UTP. Its function is as follows. Catalyzes the reversible phosphorylation of UMP to UDP. The chain is Uridylate kinase from Corynebacterium efficiens (strain DSM 44549 / YS-314 / AJ 12310 / JCM 11189 / NBRC 100395).